A 298-amino-acid chain; its full sequence is Heat stress transcription factor C-2a (298 aa).

The tract at residues 105-128 is disordered; that stretch reads SSGGGGAKRKEEAGGCGGGGEAAA. Residues 145–181 form a hydrophobic repeat HR-A/B region; the sequence is LRREQREIEGRVAAMWRRVQETERRPKQMLAFLVKVV. The Nuclear localization signal motif lies at 213-216; that stretch reads KRPR.

Belongs to the HSF family. Class C subfamily. Homotrimer. Exhibits temperature-dependent phosphorylation.

Its subcellular location is the nucleus. Functionally, transcriptional regulator that specifically binds DNA of heat shock promoter elements (HSE). This is Heat stress transcription factor C-2a (HSFC2A) from Oryza sativa subsp. japonica (Rice).